Reading from the N-terminus, the 155-residue chain is Ribosomal RNA large subunit methyltransferase H (155 aa).

S-adenosyl-L-methionine is bound by residues Leu72, Gly103, and 122 to 127; that span reads LGRMVW.

This sequence belongs to the RNA methyltransferase RlmH family. As to quaternary structure, homodimer.

Its subcellular location is the cytoplasm. The enzyme catalyses pseudouridine(1915) in 23S rRNA + S-adenosyl-L-methionine = N(3)-methylpseudouridine(1915) in 23S rRNA + S-adenosyl-L-homocysteine + H(+). In terms of biological role, specifically methylates the pseudouridine at position 1915 (m3Psi1915) in 23S rRNA. The sequence is that of Ribosomal RNA large subunit methyltransferase H from Cereibacter sphaeroides (strain KD131 / KCTC 12085) (Rhodobacter sphaeroides).